The following is a 907-amino-acid chain: Putative pentatricopeptide repeat-containing protein At5g59900 (907 aa).

PPR repeat units lie at residues 103 to 137 (STAS…ALKP), 155 to 185 (SSSS…MITK), 191 to 225 (EVRT…GIRP), 226 to 260 (DVYI…GCDV), 261 to 295 (NIVP…DLKP), 296 to 330 (DVVT…RFSP), 331 to 365 (SEAA…GVSP), 366 to 400 (NLFV…GLRP), 401 to 435 (NDVT…GLKL), 436 to 470 (SVYP…KLEP), 471 to 505 (TVVT…GIAP), 506 to 540 (SIYT…NVKP), 541 to 575 (NRVT…GIVP), 576 to 610 (DTYS…NCEL), 611 to 645 (NEIC…GVDL), 646 to 680 (DLVC…GLKP), 681 to 715 (DDVI…GCVP), 716 to 750 (NEVT…SSVP), 751 to 782 (NQVT…ILKG), 786 to 820 (NTAT…GVSP), 821 to 855 (DCIT…GIRP), and 856 to 890 (DRVA…GLIP). The disordered stretch occupies residues 887–907 (GLIPNNKTSRTTTSNDTSSKS). The span at 891 to 907 (NNKTSRTTTSNDTSSKS) shows a compositional bias: low complexity.

The protein belongs to the PPR family. P subfamily.

This chain is Putative pentatricopeptide repeat-containing protein At5g59900, found in Arabidopsis thaliana (Mouse-ear cress).